A 421-amino-acid chain; its full sequence is Plant UBX domain-containing protein 5 (421 aa).

The UBA domain occupies 4–45 (ETNENLINSFIEITSSSREEANFFLESHTWNLDAAVSTFLDN). Disordered stretches follow at residues 46–171 (DAAA…MMVQ) and 292–338 (ENFT…PSRG). A compositionally biased stretch (polar residues) spans 69 to 84 (QSPSQSHSPDYTPSET). Positions 85-102 (SPSPSRSRSASPSSRAAP) are enriched in low complexity. The 65-residue stretch at 231-295 (RIMHTITFWL…DLVRRGENFT (65 aa)) folds into the SEP domain. Residues 312-328 (GASGSGSSSAPQASSAP) show a composition bias toward low complexity. A UBX domain is found at 343–420 (PAAPTTSIQL…GIANAVVIQK (78 aa)).

In terms of assembly, interacts with CDC48A (non-hexameric) via its UBX domain.

The chain is Plant UBX domain-containing protein 5 from Arabidopsis thaliana (Mouse-ear cress).